Consider the following 69-residue polypeptide: uncharacterized protein (69 aa).

2 consecutive transmembrane segments (helical) span residues 7-29 (LLSGLGLFLGVLAGLAGLILGSI) and 44-66 (ALQVLNFLLLFISTIAGGFLGLL).

Its subcellular location is the cell membrane. This is an uncharacterized protein from Archaeoglobus fulgidus (strain ATCC 49558 / DSM 4304 / JCM 9628 / NBRC 100126 / VC-16).